Consider the following 126-residue polypeptide: Aspartate 1-decarboxylase (126 aa).

Serine 25 serves as the catalytic Schiff-base intermediate with substrate; via pyruvic acid. Serine 25 carries the post-translational modification Pyruvic acid (Ser). Threonine 57 is a binding site for substrate. Tyrosine 58 serves as the catalytic Proton donor. 73 to 75 (GGA) is a substrate binding site.

The protein belongs to the PanD family. As to quaternary structure, heterooctamer of four alpha and four beta subunits. Pyruvate is required as a cofactor. In terms of processing, is synthesized initially as an inactive proenzyme, which is activated by self-cleavage at a specific serine bond to produce a beta-subunit with a hydroxyl group at its C-terminus and an alpha-subunit with a pyruvoyl group at its N-terminus.

The protein resides in the cytoplasm. The catalysed reaction is L-aspartate + H(+) = beta-alanine + CO2. It functions in the pathway cofactor biosynthesis; (R)-pantothenate biosynthesis; beta-alanine from L-aspartate: step 1/1. Its function is as follows. Catalyzes the pyruvoyl-dependent decarboxylation of aspartate to produce beta-alanine. The chain is Aspartate 1-decarboxylase from Xylella fastidiosa (strain M12).